The primary structure comprises 137 residues: Ig heavy chain V region MOPC 315 (137 aa).

An N-terminal signal peptide occupies residues 1–18; the sequence is MKVLSLLYLLTAIPGIMS. The tract at residues 19-48 is framework-1; that stretch reads DVQLQESGPGLVKPSQSLSLTCSVTGYSIT. A disulfide bridge links Cys40 with Cys114. Residues 49-54 form a complementarity-determining-1 region; it reads SGYFWN. The interval 55–68 is framework-2; that stretch reads WIRQFPGNKLEWLG. Residues 69–84 are complementarity-determining-2; that stretch reads FIKYDGSNGYNPSLKN. A framework-3 region spans residues 85-116; it reads RVSITRDTSENQFFLKLNSVTTEDTATYYCAG. A complementarity-determining-3 region spans residues 117–126; sequence DNDHLYYFDY. The interval 127-137 is framework-4; that stretch reads WGQGTTLTVSS.

This chain is Ig heavy chain V region MOPC 315, found in Mus musculus (Mouse).